The following is a 773-amino-acid chain: 5-methyltetrahydropteroyltriglutamate--homocysteine methyltransferase (773 aa).

Residues 16–19 and Lys116 each bind 5-methyltetrahydropteroyltri-L-glutamate; that span reads RELK. L-homocysteine-binding positions include 437–439 and Glu490; that span reads IGS. Residues 437–439 and Glu490 each bind L-methionine; that span reads IGS. Residues 521 to 522 and Trp567 each bind 5-methyltetrahydropteroyltri-L-glutamate; that span reads RC. Asp605 is an L-homocysteine binding site. Asp605 is an L-methionine binding site. Position 611 (Glu611) interacts with 5-methyltetrahydropteroyltri-L-glutamate. Zn(2+) contacts are provided by His647, Cys649, and Glu671. The Proton donor role is filled by His700. Cys732 contacts Zn(2+).

This sequence belongs to the vitamin-B12 independent methionine synthase family. It depends on Zn(2+) as a cofactor.

The catalysed reaction is 5-methyltetrahydropteroyltri-L-glutamate + L-homocysteine = tetrahydropteroyltri-L-glutamate + L-methionine. The protein operates within amino-acid biosynthesis; L-methionine biosynthesis via de novo pathway; L-methionine from L-homocysteine (MetE route): step 1/1. Catalyzes the transfer of a methyl group from 5-methyltetrahydrofolate to homocysteine resulting in methionine formation. This Alkalilimnicola ehrlichii (strain ATCC BAA-1101 / DSM 17681 / MLHE-1) protein is 5-methyltetrahydropteroyltriglutamate--homocysteine methyltransferase.